The chain runs to 240 residues: Pyridoxine 5'-phosphate synthase (240 aa).

Asn7 contributes to the 3-amino-2-oxopropyl phosphate binding site. Residue 9-10 (DH) participates in 1-deoxy-D-xylulose 5-phosphate binding. Residue Arg18 participates in 3-amino-2-oxopropyl phosphate binding. His43 (proton acceptor) is an active-site residue. The 1-deoxy-D-xylulose 5-phosphate site is built by Arg45 and His50. The active-site Proton acceptor is Glu70. Residue Thr100 coordinates 1-deoxy-D-xylulose 5-phosphate. His191 acts as the Proton donor in catalysis. Residues Gly192 and 213–214 (GH) contribute to the 3-amino-2-oxopropyl phosphate site.

This sequence belongs to the PNP synthase family. As to quaternary structure, homooctamer; tetramer of dimers.

It is found in the cytoplasm. It catalyses the reaction 3-amino-2-oxopropyl phosphate + 1-deoxy-D-xylulose 5-phosphate = pyridoxine 5'-phosphate + phosphate + 2 H2O + H(+). It functions in the pathway cofactor biosynthesis; pyridoxine 5'-phosphate biosynthesis; pyridoxine 5'-phosphate from D-erythrose 4-phosphate: step 5/5. Catalyzes the complicated ring closure reaction between the two acyclic compounds 1-deoxy-D-xylulose-5-phosphate (DXP) and 3-amino-2-oxopropyl phosphate (1-amino-acetone-3-phosphate or AAP) to form pyridoxine 5'-phosphate (PNP) and inorganic phosphate. The chain is Pyridoxine 5'-phosphate synthase from Microcystis aeruginosa (strain NIES-843 / IAM M-2473).